We begin with the raw amino-acid sequence, 216 residues long: Adenylate kinase (216 aa).

10–15 (GAGKGT) contributes to the ATP binding site. The NMP stretch occupies residues 30–59 (STGDMFRAAMKAETEMGLQAKSFIDKGALV). AMP is bound by residues Thr-31, Arg-36, 57-59 (ALV), 85-88 (GFPR), and Gln-92. The interval 126 to 163 (GRRICKECGATYHLEFNPPAKADVCDKCGGELYQRSDD) is LID. Arg-127 lines the ATP pocket. Residues Cys-130 and Cys-133 each coordinate Zn(2+). 136–137 (TY) serves as a coordination point for ATP. Zn(2+) is bound by residues Cys-150 and Cys-153. Arg-160 and Arg-171 together coordinate AMP. Gln-199 is a binding site for ATP.

It belongs to the adenylate kinase family. In terms of assembly, monomer.

It localises to the cytoplasm. It carries out the reaction AMP + ATP = 2 ADP. The protein operates within purine metabolism; AMP biosynthesis via salvage pathway; AMP from ADP: step 1/1. Functionally, catalyzes the reversible transfer of the terminal phosphate group between ATP and AMP. Plays an important role in cellular energy homeostasis and in adenine nucleotide metabolism. This Bacillus cereus (strain G9842) protein is Adenylate kinase.